Consider the following 293-residue polypeptide: Undecaprenyl-diphosphatase (293 aa).

The next 7 membrane-spanning stretches (helical) occupy residues 3–23 (IALAIKALILGIVEGLTEFLP), 43–63 (KGKIFEIVIQFGAILAVCWEF), 85–105 (LNVIVATIPAITLALIFGKAI), 109–129 (LFNPIVVASAFIIGGLVILWA), 203–223 (VATEFSFFLAIPVIFGATVYE), 238–258 (IFGIGFVAAFISAFFCVRWLL), and 269–289 (FAWYRIVFGVIVLVTAYTHLI).

Belongs to the UppP family.

Its subcellular location is the cell inner membrane. It catalyses the reaction di-trans,octa-cis-undecaprenyl diphosphate + H2O = di-trans,octa-cis-undecaprenyl phosphate + phosphate + H(+). Its function is as follows. Catalyzes the dephosphorylation of undecaprenyl diphosphate (UPP). Confers resistance to bacitracin. The protein is Undecaprenyl-diphosphatase of Ralstonia nicotianae (strain ATCC BAA-1114 / GMI1000) (Ralstonia solanacearum).